Consider the following 493-residue polypeptide: Lysine--tRNA ligase (493 aa).

Mg(2+) is bound by residues E400 and E407.

Belongs to the class-II aminoacyl-tRNA synthetase family. In terms of assembly, homodimer. Mg(2+) serves as cofactor.

The protein localises to the cytoplasm. The enzyme catalyses tRNA(Lys) + L-lysine + ATP = L-lysyl-tRNA(Lys) + AMP + diphosphate. This Syntrophomonas wolfei subsp. wolfei (strain DSM 2245B / Goettingen) protein is Lysine--tRNA ligase.